The chain runs to 517 residues: Crotonobetaine/carnitine--CoA ligase (517 aa).

Belongs to the ATP-dependent AMP-binding enzyme family.

It catalyses the reaction 4-(trimethylamino)butanoate + ATP + CoA = 4-(trimethylamino)butanoyl-CoA + AMP + diphosphate. It carries out the reaction crotonobetaine + ATP + CoA = crotonobetainyl-CoA + AMP + diphosphate. The catalysed reaction is (R)-carnitine + ATP + CoA = (R)-carnitinyl-CoA + AMP + diphosphate. It functions in the pathway amine and polyamine metabolism; carnitine metabolism. In terms of biological role, catalyzes the transfer of CoA to carnitine, generating the initial carnitinyl-CoA needed for the CaiB reaction cycle. Also has activity toward crotonobetaine and gamma-butyrobetaine. The protein is Crotonobetaine/carnitine--CoA ligase of Escherichia coli O157:H7.